We begin with the raw amino-acid sequence, 1117 residues long: Reverse gyrase (1117 aa).

Residues 3–42 (LATGAKYYHSCINCGGINTDTRNEKGLPCEVCLPFEDGDV) form an RG N-terminal-type zinc finger. Residues Cys13, Cys16, Cys31, and Cys34 each contribute to the Zn(2+) site. Residues Gln84 and 101-108 (APTGVGKT) contribute to the ATP site. The Helicase ATP-binding domain maps to 88 to 284 (AKRLLLSKSF…LFRELLGFEI (197 aa)). The DEAD box signature appears at 206–209 (DDVD). The topoisomerase I stretch occupies residues 551–1117 (KDMKSRMIIV…EELNEILIKN (567 aa)). One can recognise a Toprim domain in the interval 555 to 712 (SRMIIVESPT…NVQRIEMHEI (158 aa)). Residue Glu561 participates in Mg(2+) binding. The RG C-terminal-type zinc-finger motif lies at 631 to 658 (IKRCSSCGAQFTDELPRCPYCNSDKIDD). Positions 634, 637, 648, and 651 each coordinate Zn(2+). Residue Asp681 participates in Mg(2+) binding. The region spanning 728–1114 (DVNLVKSQIV…NLYEELNEIL (387 aa)) is the Topo IA-type catalytic domain. The O-(5'-phospho-DNA)-tyrosine intermediate role is filled by Tyr864.

It in the N-terminal section; belongs to the DEAD box helicase family. DDVD subfamily. This sequence in the C-terminal section; belongs to the type IA topoisomerase family. In terms of assembly, monomer. The cofactor is Zn(2+). It depends on Mg(2+) as a cofactor.

It localises to the cytoplasm. The catalysed reaction is ATP + H2O = ADP + phosphate + H(+). Functionally, modifies the topological state of DNA by introducing positive supercoils in an ATP-dependent process, increasing the linking number in steps of +1; also positively supercoils with dATP and ATP-gamma-S. With UTP or dTTP relaxes negatively supercoiled DNA, in the absence of any nucleotide partially relaxes negative supercoils. In the absence of nucleotide has a higher affinity for dsDNA with a single-stranded tail than dsDNA or ssDNA. Has an ATPase activity in the absence of DNA. Binds to single-stranded DNA, transiently cleaves and then rejoins the ends, introducing a positive supercoil in the process. The scissile phosphodiester is attacked by the catalytic tyrosine of the enzyme, resulting in the formation of a DNA-(5'-phosphotyrosyl)-enzyme intermediate. Probably involved in rewinding DNA strands in regions of the chromosome that have opened up to allow replication, transcription, DNA repair and/or for DNA protection. The chain is Reverse gyrase from Caldanaerobacter subterraneus subsp. tengcongensis (strain DSM 15242 / JCM 11007 / NBRC 100824 / MB4) (Thermoanaerobacter tengcongensis).